The chain runs to 2135 residues: Plexin-B1 (2135 aa).

The N-terminal stretch at 1-19 (MPALGPALLQALWAGWVLT) is a signal peptide. In terms of domain architecture, Sema spans 20–479 (LQPLPPTAFT…TQSTLLKVPV (460 aa)). Topologically, residues 20 to 1490 (LQPLPPTAFT…SPGAFPVAAQ (1471 aa)) are extracellular. Residue asparagine 31 is glycosylated (N-linked (GlcNAc...) asparagine). 9 cysteine pairs are disulfide-bonded: cysteine 79–cysteine 88, cysteine 111–cysteine 119, cysteine 252–cysteine 377, cysteine 268–cysteine 322, cysteine 340–cysteine 364, cysteine 482–cysteine 499, cysteine 488–cysteine 533, cysteine 491–cysteine 508, and cysteine 502–cysteine 514. An N-linked (GlcNAc...) asparagine glycan is attached at asparagine 334. A glycan (N-linked (GlcNAc...) asparagine) is linked at asparagine 543. Cysteines 570 and 588 form a disulfide. Disordered regions lie at residues 671 to 829 (MVAS…TTFP) and 849 to 884 (LPEADEWTGGDAPAFSTSTLLSGDGDSAELEGPPAP). The span at 681–697 (SPDPPARGGPSPSPPTA) shows a compositional bias: pro residues. 2 stretches are compositionally biased toward low complexity: residues 698 to 710 (PKALATPAPDTLP) and 734 to 754 (SPWGPWAGSGSISSPGSTGSP). IPT/TIG domains follow at residues 1070–1160 (PLIH…FAYQ), 1162–1249 (PKVH…FKYT), and 1252–1375 (PNIT…FSYE). Asparagine 1183, asparagine 1253, and asparagine 1330 each carry an N-linked (GlcNAc...) asparagine glycan. The helical transmembrane segment at 1491–1511 (VGLGVGTSLLALGVIIIVLMY) threads the bilayer. Residues 1507 to 1539 (IVLMYRRKSKQALRDYKKVQIQLENLESSVRDR) are a coiled coil. The Cytoplasmic portion of the chain corresponds to 1512 to 2135 (RRKSKQALRD…AAVENKVTDL (624 aa)). The disordered stretch occupies residues 1883–1908 (PWHLVKPSDEPEPPRPRRGSLRGGER). Basic and acidic residues predominate over residues 1888-1897 (KPSDEPEPPR).

Belongs to the plexin family. Monomer, and heterodimer with PLXNB2 after proteolytic processing. Binds RAC1 that has been activated by GTP binding. Interaction with SEMA4D promotes binding of cytoplasmic ligands. Interacts with PLXNA1. Interacts with ARHGEF11 and ARHGEF12. Interacts with ERBB2. Interacts with MET. Interacts with MST1R. Interacts with RRAS. Interacts with RHOD. Interacts with RND1. Interacts with NRP1 and NRP2. Phosphorylated on tyrosine residues by ERBB2 and MET upon SEMA4D binding. In terms of processing, proteolytic processing favors heterodimerization with PLXNB2 and SEMA4D binding. As to expression, highly expressed in fetal kidney, and at slightly lower levels in fetal brain, lung and liver.

The protein localises to the cell membrane. It localises to the secreted. In terms of biological role, receptor for SEMA4D. Plays a role in GABAergic synapse development. Mediates SEMA4A- and SEMA4D-dependent inhibitory synapse development. Plays a role in RHOA activation and subsequent changes of the actin cytoskeleton. Plays a role in axon guidance, invasive growth and cell migration. The sequence is that of Plexin-B1 (PLXNB1) from Homo sapiens (Human).